We begin with the raw amino-acid sequence, 94 residues long: Small ribosomal subunit protein bS18 (94 aa).

This sequence belongs to the bacterial ribosomal protein bS18 family. In terms of assembly, part of the 30S ribosomal subunit. Forms a tight heterodimer with protein bS6.

Its function is as follows. Binds as a heterodimer with protein bS6 to the central domain of the 16S rRNA, where it helps stabilize the platform of the 30S subunit. This Rickettsia bellii (strain OSU 85-389) protein is Small ribosomal subunit protein bS18.